Reading from the N-terminus, the 258-residue chain is Indole-3-glycerol phosphate synthase (258 aa).

Belongs to the TrpC family.

The catalysed reaction is 1-(2-carboxyphenylamino)-1-deoxy-D-ribulose 5-phosphate + H(+) = (1S,2R)-1-C-(indol-3-yl)glycerol 3-phosphate + CO2 + H2O. It participates in amino-acid biosynthesis; L-tryptophan biosynthesis; L-tryptophan from chorismate: step 4/5. This chain is Indole-3-glycerol phosphate synthase, found in Geobacillus sp. (strain WCH70).